The following is a 165-amino-acid chain: Interferon gamma (165 aa).

The N-terminal stretch at 1–23 is a signal peptide; that stretch reads MKYTSYILAFQLCIVLGSLGCYC. Gln24 is subject to Pyrrolidone carboxylic acid. N-linked (GlcNAc...) asparagine glycosylation is found at Asn48 and Asn120.

The protein belongs to the type II (or gamma) interferon family. Homodimer. Interacts with IFNGR1 (via extracellular domain); this interaction promotes IFNGR1 dimerization. Released primarily from activated T lymphocytes.

The protein localises to the secreted. Its function is as follows. Type II interferon produced by immune cells such as T-cells and NK cells that plays crucial roles in antimicrobial, antiviral, and antitumor responses by activating effector immune cells and enhancing antigen presentation. Primarily signals through the JAK-STAT pathway after interaction with its receptor IFNGR1 to affect gene regulation. Upon IFNG binding, IFNGR1 intracellular domain opens out to allow association of downstream signaling components JAK2, JAK1 and STAT1, leading to STAT1 activation, nuclear translocation and transcription of IFNG-regulated genes. Many of the induced genes are transcription factors such as IRF1 that are able to further drive regulation of a next wave of transcription. Plays a role in class I antigen presentation pathway by inducing a replacement of catalytic proteasome subunits with immunoproteasome subunits. In turn, increases the quantity, quality, and repertoire of peptides for class I MHC loading. Increases the efficiency of peptide generation also by inducing the expression of activator PA28 that associates with the proteasome and alters its proteolytic cleavage preference. Up-regulates as well MHC II complexes on the cell surface by promoting expression of several key molecules such as cathepsins B/CTSB, H/CTSH, and L/CTSL. Participates in the regulation of hematopoietic stem cells during development and under homeostatic conditions by affecting their development, quiescence, and differentiation. The sequence is that of Interferon gamma (IFNG) from Cercocebus atys (Sooty mangabey).